The sequence spans 248 residues: Metallo-beta-lactamase type 2 (248 aa).

Positions 1–21 are cleaved as a signal peptide; it reads MKGLKGLLVLALGFTGLQVFG. Zn(2+) is bound by residues histidine 97, histidine 99, aspartate 101, histidine 160, and cysteine 179. Lysine 182 contributes to the substrate binding site. Histidine 221 contacts Zn(2+).

This sequence belongs to the metallo-beta-lactamase superfamily. Class-B beta-lactamase family. In terms of assembly, monomer. Zn(2+) serves as cofactor.

Its subcellular location is the periplasm. The catalysed reaction is a beta-lactam + H2O = a substituted beta-amino acid. Its function is as follows. Confers resistance to the different beta-lactams antibiotics (penicillin, cephalosporin and carbapenem) via the hydrolysis of the beta-lactam ring. The protein is Metallo-beta-lactamase type 2 (blaB8) of Elizabethkingia meningoseptica (Chryseobacterium meningosepticum).